The primary structure comprises 501 residues: Vitamin D 25-hydroxylase (501 aa).

The first 26 residues, 1 to 26 (MWKLWRAEEGAAALGGALFLLLFALG), serve as a signal peptide directing secretion. A substrate-binding site is contributed by Ala-250. Cys-448 contacts heme.

This sequence belongs to the cytochrome P450 family. Homodimer. Heme is required as a cofactor.

The protein resides in the endoplasmic reticulum membrane. Its subcellular location is the microsome membrane. It carries out the reaction calciol + reduced [NADPH--hemoprotein reductase] + O2 = calcidiol + oxidized [NADPH--hemoprotein reductase] + H2O + H(+). The enzyme catalyses vitamin D2 + reduced [NADPH--hemoprotein reductase] + O2 = 25-hydroxyvitamin D2 + oxidized [NADPH--hemoprotein reductase] + H2O + H(+). The catalysed reaction is 1alpha-hydroxyvitamin D2 + reduced [NADPH--hemoprotein reductase] + O2 = 1alpha,25-dihydroxyvitamin D2 + oxidized [NADPH--hemoprotein reductase] + H2O + H(+). It catalyses the reaction alfacalcidol + reduced [NADPH--hemoprotein reductase] + O2 = calcitriol + oxidized [NADPH--hemoprotein reductase] + H2O + H(+). Its pathway is hormone biosynthesis; vitamin D biosynthesis. Its function is as follows. A cytochrome P450 monooxygenase involved in activation of vitamin D precursors. Catalyzes hydroxylation at C-25 of both forms of vitamin D, vitamin D(2) and D(3) (calciol). Can metabolize vitamin D analogs/prodrugs 1alpha-hydroxyvitamin D(2) (doxercalciferol) and 1alpha-hydroxyvitamin D(3) (alfacalcidol) forming 25-hydroxy derivatives. Mechanistically, uses molecular oxygen inserting one oxygen atom into a substrate, and reducing the second into a water molecule, with two electrons provided by NADPH via cytochrome P450 reductase (CPR; NADPH-ferrihemoprotein reductase). The polypeptide is Vitamin D 25-hydroxylase (CYP2R1) (Homo sapiens (Human)).